A 95-amino-acid chain; its full sequence is Integration host factor subunit beta (95 aa).

Residues Ser52–Asp95 are disordered. Basic and acidic residues predominate over residues Pro82–Asp95.

It belongs to the bacterial histone-like protein family. Heterodimer of an alpha and a beta chain.

In terms of biological role, this protein is one of the two subunits of integration host factor, a specific DNA-binding protein that functions in genetic recombination as well as in transcriptional and translational control. The sequence is that of Integration host factor subunit beta from Methylococcus capsulatus (strain ATCC 33009 / NCIMB 11132 / Bath).